The sequence spans 537 residues: MEPGSKLSEDETFSQTFNEEEQEDSRNKDILAFDPSVDNEPLLTKKLSSLSIYSEPSPDEASNLQELKFVSSPPSVRVPRSRRNRRNSRVDSEARKRQFDRVKHSVSNSCKLHLSLQGQEAAQLRSDSLYLEASDKRDLTSLVTRVKELARKLSAARLAFRFRKVLLICNDNKESIERSVELAQWLLDTFSFTPSSSHNNMASSNTQSNTQLSEMESEEKSFNKDVYPNDEYTPFTPKNQFVIYLEDTLASLDVVESLSPKKNVRFWTSELCTQCPNLFDCVITVGDDSAALRASWLFQDVVPPVLSFSTAKAGFLSILPIAEYTKTLDLIFHRGFTVNLRMRFQCSIMRYVGEHSTHICEGQYSVLNELLIDRGPNPFMISLDLYVENEYITTLQSDGVCVSTPTGSTAYSVAAGGSLCHPGIPAILISAICPHSLSFRPIILPDSMTLRIVVPLDARSNAWCAFDGHHRIELGLGDYISISASSFPFPSVIRSKYSKDWFDILRQTLNWNDRKGRQRSSRYKSHVHKTNTSEEQN.

4 disordered regions span residues 1–33 (MEPG…ILAF), 71–98 (SSPP…RKRQ), 197–220 (SHNN…SEEK), and 516–537 (GRQR…EEQN). The residue at position 72 (Ser-72) is a Phosphoserine. Basic and acidic residues predominate over residues 88 to 98 (SRVDSEARKRQ). Residues 197–214 (SHNNMASSNTQSNTQLSE) show a composition bias toward polar residues. A compositionally biased stretch (basic residues) spans 516–529 (GRQRSSRYKSHVHK).

The protein belongs to the NAD kinase family.

This is an uncharacterized protein from Schizosaccharomyces pombe (strain 972 / ATCC 24843) (Fission yeast).